The following is a 928-amino-acid chain: MSSSANSIKVVARFRPQNRVEIESGGQPIVTFQGPDTCTVDSKEAQGSFTFDRVFDMSCKQSDIFDFSIKPTVDDILNGYNGTVFAYGQTGAGKSYTMMGTSIDDPDGRGVIPRIVEQIFTSILSSAANIEYTVRVSYMEIYMERIRDLLAPQNDNLPVHEEKNRGVYVKGLLEIYVSSVQEVYEVMRRGGNARAVAATNMNQESSRSHSIFVITITQKNVETGSAKSGQLFLVDLAGSEKVGKTGASGQTLEEAKKINKSLSALGMVINALTDGKSSHVPYRDSKLTRILQESLGGNSRTTLIINCSPSSYNDAETLSTLRFGMRAKSIKNKAKVNAELSPAELKQMLAKAKTQITSFENYIVNLESEVQVWRGGETVPKEKWVPPLELAITPSKSASTTARPSTPSRLLPESRAETPAISDRAGTPSLPLDKDEREEFLRRENELQDQIAEKESIAAAAERQLRETKEELIALKDHDSKLGKENERLISESNEFKMQLERLAFENKEAQITIDGLKDANSELTAELDEVKQQMLDMKMSAKETSAVLDEKEKKKAEKMAKMMAGFDLSGDVFSDNERAVADAIAQLDALFEISSAGDAIPPEDIKALREKLVETQGFVRQAELSSFSAASSDAEARKRAELEARLEALQQEHEELLSRNLTEADKEEVKALLAKSLSDKSAVQVELVEQLKADIALKNSETEHLKALVDDLQRRVKAGGAGVAMANGKTVQQQLAEFDVMKKSLMRDLQNRCERVVELEISLDETREQYNNVLRSSNNRAQQKKMAFLERNLEQLTQVQRQLVEQNSALKKEVAIAERKLMARNERIQSLESLLQESQEKMAQANHKFEVQLAAVKDRLEAAKAGSTRGLGTDAGLGGFSIGSRIAKPLRGGGDAVAGATATNPTIATLQQNPPENKRSSWFFQKS.

The region spanning serine 7–isoleucine 330 is the Kinesin motor domain. ATP contacts are provided by residues glycine 88–serine 95 and glycine 238–threonine 245. Residues alanine 343 to alanine 866 adopt a coiled-coil conformation. Positions serine 395–arginine 409 are enriched in low complexity. Disordered stretches follow at residues serine 395–lysine 434 and glycine 893–serine 928. Over residues asparagine 905–serine 928 the composition is skewed to polar residues.

The protein belongs to the TRAFAC class myosin-kinesin ATPase superfamily. Kinesin family. Kinesin subfamily.

The protein localises to the cytoplasm. It localises to the cytoskeleton. In terms of biological role, kinesin is a microtubule-associated force-producing protein that may play a role in organelle transport. Its motor activity is directed toward the microtubule's plus end. The polypeptide is Kinesin heavy chain (kin) (Neurospora crassa (strain ATCC 24698 / 74-OR23-1A / CBS 708.71 / DSM 1257 / FGSC 987)).